The chain runs to 102 residues: Small ribosomal subunit protein uS10 (102 aa).

It belongs to the universal ribosomal protein uS10 family. In terms of assembly, part of the 30S ribosomal subunit.

Its function is as follows. Involved in the binding of tRNA to the ribosomes. This is Small ribosomal subunit protein uS10 from Mesorhizobium japonicum (strain LMG 29417 / CECT 9101 / MAFF 303099) (Mesorhizobium loti (strain MAFF 303099)).